A 182-amino-acid polypeptide reads, in one-letter code: Small ribosomal subunit protein uS4c (182 aa).

Positions 82 to 143 (MRLDNILFRL…KQRSKALIQN (62 aa)) constitute an S4 RNA-binding domain.

This sequence belongs to the universal ribosomal protein uS4 family. In terms of assembly, part of the 30S ribosomal subunit. Contacts protein S5. The interaction surface between S4 and S5 is involved in control of translational fidelity.

Its subcellular location is the plastid. It is found in the chloroplast. In terms of biological role, one of the primary rRNA binding proteins, it binds directly to 16S rRNA where it nucleates assembly of the body of the 30S subunit. Functionally, with S5 and S12 plays an important role in translational accuracy. This is Small ribosomal subunit protein uS4c (rps4) from Libertia formosa (Snowy mermaid).